The following is a 183-amino-acid chain: NADH dehydrogenase [ubiquinone] iron-sulfur protein 4, mitochondrial (183 aa).

A mitochondrion-targeting transit peptide spans 1–28 (MSALRQVMCRSTASLQLYQANRAAAARW). At S181 the chain carries Phosphoserine.

Belongs to the complex I NDUFS4 subunit family.

It is found in the mitochondrion inner membrane. Functionally, accessory subunit of the mitochondrial membrane respiratory chain NADH dehydrogenase (Complex I), that is believed not to be involved in catalysis. Complex I functions in the transfer of electrons from NADH to the respiratory chain. The immediate electron acceptor for the enzyme is believed to be ubiquinone. The chain is NADH dehydrogenase [ubiquinone] iron-sulfur protein 4, mitochondrial from Drosophila melanogaster (Fruit fly).